The sequence spans 300 residues: Probable lipid kinase YegS-like (300 aa).

The DAGKc domain maps to 1 to 129 (MSKKALLILH…CDVIRVNNHY (129 aa)). ATP-binding positions include T38, 64-70 (GDGSVRD), and T92. Residues L210, D213, and L215 each contribute to the Mg(2+) site. E272 acts as the Proton acceptor in catalysis.

Belongs to the diacylglycerol/lipid kinase family. YegS lipid kinase subfamily. Mg(2+) is required as a cofactor. Requires Ca(2+) as cofactor.

It localises to the cytoplasm. Functionally, probably phosphorylates lipids; the in vivo substrate is unknown. In Alcanivorax borkumensis (strain ATCC 700651 / DSM 11573 / NCIMB 13689 / SK2), this protein is Probable lipid kinase YegS-like.